The chain runs to 331 residues: MPTGCSDTYPRLIGDIGGTHARFAVIDSPGSPPTRFRTLCCDDHAGLLEAVQAYLLLERGLAGPRVAAFGIANPVEGDRVRMTNHDWSFSIEQLRIELGLARLVVLNDFTALALSLPRLQAGERRQIGGGNECAGRPVALIGPGTGLGVSGLVRCGNGYAPLEGEGGHVTLAASTPREAELIAVLAARFDHVSAERALSGPGLIALHDAIRQLAGAPPLALEADEISARAMAASCPWCAEALQVFCGMLGSVAGDLALTLGAFGGVYIGGGIVPKLGDFFDRSDFRRRFEQKGRFSEYLARIPCYVILAEYPALLGAATALDNALAGETGT.

14–19 (GDIGGT) is a binding site for ATP.

The protein belongs to the bacterial glucokinase family.

The protein resides in the cytoplasm. The enzyme catalyses D-glucose + ATP = D-glucose 6-phosphate + ADP + H(+). The polypeptide is Glucokinase (Aromatoleum aromaticum (strain DSM 19018 / LMG 30748 / EbN1) (Azoarcus sp. (strain EbN1))).